The primary structure comprises 149 residues: Probable flagellum biosynthesis repressor protein FlbT (149 aa).

The protein belongs to the FlbT family.

Its function is as follows. Has a post-transcriptional repressor function in flagellum biogenesis. Associates with the 5'-UTR of fljK mRNA and promotes its degradation. In Rhizobium leguminosarum bv. trifolii (strain WSM2304), this protein is Probable flagellum biosynthesis repressor protein FlbT.